The chain runs to 182 residues: Nascent polypeptide-associated complex subunit alpha (182 aa).

The NAC-A/B domain occupies 17-81 (NKNEKKAKEL…AKVDDMNQRI (65 aa)). The interval 120-148 (ASLQGGESNADAAEDDNEEVDETGINPKD) is disordered. Residues 131–141 (AAEDDNEEVDE) are compositionally biased toward acidic residues. Positions 144 to 182 (INPKDIDLIVEQTRVSRGSAVKALKKHDGDMVNALMELS) constitute a UBA domain.

The protein belongs to the NAC-alpha family. Part of the nascent polypeptide-associated complex (NAC), consisting of EGD2 and EGD1. NAC associates with ribosomes via EGD1.

Its subcellular location is the cytoplasm. It localises to the nucleus. Its function is as follows. Component of the nascent polypeptide-associated complex (NAC), a dynamic component of the ribosomal exit tunnel, protecting the emerging polypeptides from interaction with other cytoplasmic proteins to ensure appropriate nascent protein targeting. The NAC complex also promotes mitochondrial protein import by enhancing productive ribosome interactions with the outer mitochondrial membrane and blocks the inappropriate interaction of ribosomes translating non-secretory nascent polypeptides with translocation sites in the membrane of the endoplasmic reticulum. EGD2 may also be involved in transcription regulation. This is Nascent polypeptide-associated complex subunit alpha (EGD2) from Lodderomyces elongisporus (strain ATCC 11503 / CBS 2605 / JCM 1781 / NBRC 1676 / NRRL YB-4239) (Yeast).